We begin with the raw amino-acid sequence, 252 residues long: 2-succinyl-6-hydroxy-2,4-cyclohexadiene-1-carboxylate synthase (252 aa).

It belongs to the AB hydrolase superfamily. MenH family. In terms of assembly, monomer.

The enzyme catalyses 5-enolpyruvoyl-6-hydroxy-2-succinyl-cyclohex-3-ene-1-carboxylate = (1R,6R)-6-hydroxy-2-succinyl-cyclohexa-2,4-diene-1-carboxylate + pyruvate. The protein operates within quinol/quinone metabolism; 1,4-dihydroxy-2-naphthoate biosynthesis; 1,4-dihydroxy-2-naphthoate from chorismate: step 3/7. Its pathway is quinol/quinone metabolism; menaquinone biosynthesis. Its function is as follows. Catalyzes a proton abstraction reaction that results in 2,5-elimination of pyruvate from 2-succinyl-5-enolpyruvyl-6-hydroxy-3-cyclohexene-1-carboxylate (SEPHCHC) and the formation of 2-succinyl-6-hydroxy-2,4-cyclohexadiene-1-carboxylate (SHCHC). This is 2-succinyl-6-hydroxy-2,4-cyclohexadiene-1-carboxylate synthase from Salmonella paratyphi A (strain ATCC 9150 / SARB42).